A 162-amino-acid polypeptide reads, in one-letter code: MKFLVLALCIAAASAAVLTTEQADLVKKTWSTVKFNEVDILYAVFKAYPDIMAKFPQFAGKDLDSIKDSAAFATHATRIVSFLSEVISLAGSDANIPAIQNLAKELATSHKPRGVSKDQFTEFRTALFTYLKAHINFDGPTETAWTLALDTTYAMLFSAMDS.

The first 15 residues, Met-1–Ala-15, serve as a signal peptide directing secretion. Residues Val-17–Asp-161 enclose the Globin domain. Residues His-75 and His-110 each coordinate heme b.

It belongs to the globin family. As to quaternary structure, homodimer.

The polypeptide is Globin CTT-VI (CTT-6) (Chironomus thummi thummi (Midge)).